The primary structure comprises 492 residues: N-succinylglutamate 5-semialdehyde dehydrogenase (492 aa).

An NAD(+)-binding site is contributed by 220 to 225; the sequence is GSASTG. Catalysis depends on residues Glu-243 and Cys-277.

The protein belongs to the aldehyde dehydrogenase family. AstD subfamily.

It catalyses the reaction N-succinyl-L-glutamate 5-semialdehyde + NAD(+) + H2O = N-succinyl-L-glutamate + NADH + 2 H(+). The protein operates within amino-acid degradation; L-arginine degradation via AST pathway; L-glutamate and succinate from L-arginine: step 4/5. Its function is as follows. Catalyzes the NAD-dependent reduction of succinylglutamate semialdehyde into succinylglutamate. The sequence is that of N-succinylglutamate 5-semialdehyde dehydrogenase from Salmonella typhimurium (strain LT2 / SGSC1412 / ATCC 700720).